The sequence spans 216 residues: Adenylate kinase (216 aa).

10–15 (GAGKGT) lines the ATP pocket. The segment at 30–59 (STGDMLRAAVAAGTEVGKRAKAVMDAGKLV) is NMP. AMP-binding positions include threonine 31, arginine 36, 57 to 59 (KLV), 85 to 88 (GFPR), and glutamine 92. The interval 126 to 163 (GRYTCANCGAGYHDENLRPKVEGVCDRCGSTHFKRRAD) is LID. ATP is bound at residue arginine 127. Residues cysteine 130, cysteine 133, cysteine 150, and cysteine 153 each contribute to the Zn(2+) site. Arginine 160 and arginine 172 together coordinate AMP. ATP is bound at residue alanine 200.

The protein belongs to the adenylate kinase family. Monomer.

It is found in the cytoplasm. It catalyses the reaction AMP + ATP = 2 ADP. The protein operates within purine metabolism; AMP biosynthesis via salvage pathway; AMP from ADP: step 1/1. Catalyzes the reversible transfer of the terminal phosphate group between ATP and AMP. Plays an important role in cellular energy homeostasis and in adenine nucleotide metabolism. The sequence is that of Adenylate kinase from Rhizobium rhizogenes (strain K84 / ATCC BAA-868) (Agrobacterium radiobacter).